A 78-amino-acid polypeptide reads, in one-letter code: Large ribosomal subunit protein bL28 (78 aa).

Belongs to the bacterial ribosomal protein bL28 family.

The sequence is that of Large ribosomal subunit protein bL28 from Marinobacter nauticus (strain ATCC 700491 / DSM 11845 / VT8) (Marinobacter aquaeolei).